The chain runs to 1145 residues: Structure-specific endonuclease subunit SLX4 (1145 aa).

The interval 48–108 (ADIPVQPDPP…GKSKQQPSIS (61 aa)) is disordered. Positions 321–372 (ERETQKCRQLRQQHELVYAELERYYGDPQKLEEEVMQELDELEKLVADNMIE) form a coiled coil. The segment covering 382 to 393 (EAESSSTGSSPS) has biased composition (low complexity). Disordered stretches follow at residues 382-442 (EAES…EDEP), 613-634 (QSSHQLGILTTPNDTEHSSSFS), and 666-689 (SAEKRVSPAASPYKQSDASVDLTQ). The span at 395–410 (EPPDKRPKMTMEDKEN) shows a compositional bias: basic and acidic residues. 3 stretches are compositionally biased toward polar residues: residues 411-430 (LQPTTSKASLTVPAQSTRCT), 613-633 (QSSHQLGILTTPNDTEHSSSF), and 678-689 (YKQSDASVDLTQ).

Belongs to the SLX4 family. In terms of assembly, forms a heterodimer with SLX1. Interacts with mei-9; catalytic subunit of the MEI-9-ERCC1 endonuclease.

The protein resides in the nucleus. Regulatory subunit that interacts with and increases the activity of different structure-specific endonucleases. Has several distinct roles in protecting genome stability by resolving diverse forms of deleterious DNA structures originating from replication and recombination intermediates and from DNA damage. Component of the SLX1-SLX4 structure-specific endonuclease that resolves DNA secondary structures generated during DNA repair and recombination. Has endonuclease activity towards branched DNA substrates, introducing single-strand cuts in duplex DNA close to junctions with ss-DNA. Interacts with the structure-specific MEI-9-ERCC1 endonuclease to generate meiotic crossovers. This chain is Structure-specific endonuclease subunit SLX4 (mus312), found in Drosophila melanogaster (Fruit fly).